The primary structure comprises 673 residues: Gametogenetin (673 aa).

Residues 1–599 (MGNVQSEPSA…TSTAGASNKG (599 aa)) form a disordered region. The segment covering 14–30 (SRKEQASDRASDSRRTP) has biased composition (basic and acidic residues). Positions 70–83 (ASSSPLPLTLELPS) are enriched in low complexity. Residues 125–506 (RGLLEASHRG…APTPPSTLSP (382 aa)) are interaction with GGNBP1. Pro residues predominate over residues 161-178 (PAPPPTPLEPRKQLPPAP). Positions 192–202 (LASSATSPTES) are enriched in polar residues. The span at 257 to 268 (SASGPLAAKASP) shows a compositional bias: low complexity. Phosphoserine is present on Ser-399. The span at 413–424 (PRRPTPALLAPP) shows a compositional bias: low complexity. Residues 438-475 (RPVPPSPQQIPPLPPPPPTPPATPPPAPPPTPQPPALP) are compositionally biased toward pro residues. Over residues 504–531 (LSPTAAADQVPAATPATVTSQVPATATA) the composition is skewed to low complexity. The tract at residues 511 to 673 (DQVPAATPAT…HYDLQATHST (163 aa)) is interactions with ZNF403/GGNBP2 and OAZ3. Residues 542 to 551 (TRTRRNKGPR) are compositionally biased toward basic residues.

As to quaternary structure, isoform 1 and isoform 3 interact with FANCL. Isoform 1 interacts with GGNBP1, ZNF403/GGNBP2 and OAZ3. Isoform 2 interacts with GGNBP1. Testis-specific. Specifically expressed in the germ cells and not in the somatic, Sertoli, or Leydig cells. In adult testis, expression starts in stage VIII pachytene spermatocytes, increases in stage IX and X pachytene spermatocytes, and culminates in stage XI diplotene spermatocytes and the meiotic cells in stage XII. Expression decreases slightly in step 1-3 spermatids, further decreases in step 4-11 spermatids, and is no longer detectable in step 12 spermatids and beyond. Isoform 2 is mainly expressed in testis.

The protein localises to the cytoplasm. It localises to the perinuclear region. The protein resides in the cytoplasmic vesicle. Its subcellular location is the nucleus. It is found in the nucleolus. Functionally, may be involved in spermatogenesis. This chain is Gametogenetin (Ggn), found in Mus musculus (Mouse).